The chain runs to 441 residues: Trigger factor (441 aa).

In terms of domain architecture, PPIase FKBP-type spans 163-248 (GDQVVFDFVG…IKEVKKPVPA (86 aa)).

The protein belongs to the FKBP-type PPIase family. Tig subfamily.

The protein resides in the cytoplasm. The enzyme catalyses [protein]-peptidylproline (omega=180) = [protein]-peptidylproline (omega=0). Involved in protein export. Acts as a chaperone by maintaining the newly synthesized protein in an open conformation. Functions as a peptidyl-prolyl cis-trans isomerase. The chain is Trigger factor from Jannaschia sp. (strain CCS1).